Here is a 113-residue protein sequence, read N- to C-terminus: MECFPSFSFSGFSCFSLFLDNGDEDRSDNWIFFNDIDFCKSGFEYELKHRKHNNEPCRRILVLKHRSGNVRINRIISLLDVQSLHVYINLFHSSFIDKITIHLTKLCIFPGLP.

This is an uncharacterized protein from Saccharomyces cerevisiae (strain ATCC 204508 / S288c) (Baker's yeast).